Reading from the N-terminus, the 2541-residue chain is Highly reducing polyketide synthase otaA (2541 aa).

The 423-residue stretch at 9–431 folds into the Ketosynthase family 3 (KS3) domain; sequence SEPLAIIGLA…GTNAHVVLED (423 aa). Residues Cys182, His317, and His355 each act as for beta-ketoacyl synthase activity in the active site. The 318-residue stretch at 571 to 888 folds into the Malonyl-CoA:ACP transacylase (MAT) domain; sequence FIFTGQGANW…GSLLKRYETD (318 aa). Positions 957-1092 are N-terminal hotdog fold; sequence HELLGVPVED…GSVRVETGPH (136 aa). The tract at residues 957–1251 is dehydratase (DH) domain; sequence HELLGVPVED…GLDLVQLPPS (295 aa). The region spanning 957 to 1254 is the PKS/mFAS DH domain; sequence HELLGVPVED…LVQLPPSEDA (298 aa). Positions 1108–1254 are C-terminal hotdog fold; that stretch reads TESVDIAQMY…LVQLPPSEDA (147 aa). 2 residues coordinate S-adenosyl-L-methionine: Ile1420 and Glu1442. The tract at residues 1433 to 1605 is methyltransferase (CMeT) domain; the sequence is HAQTGIKVLE…DQELRNAGLQ (173 aa). Residues 1838 to 2141 form the Enoyl reductase (ER) domain; it reads HQPNGFHFVE…RQGNAGPWVL (304 aa). The Ketoreductase (KR) domain maps to 2165 to 2344; the sequence is ASYLLIGGFG…PATSISLGSV (180 aa). In terms of domain architecture, Carrier spans 2453-2530; that stretch reads DAVELVTRAI…QLAQQAAGGS (78 aa). At Ser2490 the chain carries O-(pantetheine 4'-phosphoryl)serine.

Requires pantetheine 4'-phosphate as cofactor.

The catalysed reaction is 4 malonyl-CoA + acetyl-CoA + 5 NADPH + 9 H(+) = 7-methylmellein + 3 CO2 + 5 NADP(+) + 5 CoA + 4 H2O. The protein operates within mycotoxin biosynthesis. Highly reducing polyketide synthase; part of the gene cluster that mediates the biosynthesis of ochratoxin A (OTA), a mycotoxin composed of a chlorinated type I polyketide dihydroisocoumarin moiety linked to L-phenylalanine, and demonstrated to have nephrotoxic, immunotoxic, genotoxic, neurotoxic, and teratogenic properties. OtaA catalyzes the condensation of one acetate and 4 malonate units to form the isocoumarin group. The pathway begins with the highly reducing polyketide synthase otaA that catalyzes the formation of the isocoumarin group during the initial stages of biosynthesis, starting from one acetate and 4 malonate units, to originate the characteristic pentaketide skeleton 7-methylmellein (7-MM) of the OTA molecule. The newly identified cyclase otaY might be involved in the polyketide cyclization reaction during the initial steps of the OTA biosynthesis. 7-MM is then oxidized into 7-carboxymellein (also called ochratoxin beta) by the cytochrome P450 monooxygenase otaC. The NRPS encoded by the otaB gene is involved in the linking of phenylalanine to the dihydroisocoumarin ring. The reaction catalyzed by NRPS results in the production of ochratoxin B (OTB), which is the non-chlorinated analog of OTA and which subsequently serves as the substrate of the halogenase otaD for chlorination activity to form the final molecular structure of OTA, containing a chlorine atom in the C-5 position of the molecule. The protein is Highly reducing polyketide synthase otaA of Aspergillus carbonarius (strain ITEM 5010).